Here is a 542-residue protein sequence, read N- to C-terminus: Chaperonin GroEL 2 (542 aa).

Residues 30–33 (TLGP), Lys51, 87–91 (DGTTT), Gly415, and Asp496 contribute to the ATP site.

The protein belongs to the chaperonin (HSP60) family. As to quaternary structure, forms a cylinder of 14 subunits composed of two heptameric rings stacked back-to-back. Interacts with the co-chaperonin GroES.

Its subcellular location is the cytoplasm. It carries out the reaction ATP + H2O + a folded polypeptide = ADP + phosphate + an unfolded polypeptide.. Its function is as follows. Together with its co-chaperonin GroES, plays an essential role in assisting protein folding. The GroEL-GroES system forms a nano-cage that allows encapsulation of the non-native substrate proteins and provides a physical environment optimized to promote and accelerate protein folding. The polypeptide is Chaperonin GroEL 2 (Rhizobium leguminosarum).